The following is a 184-amino-acid chain: GMP synthase [glutamine-hydrolyzing] subunit A (184 aa).

Residues 3-184 (RIVVVDNHGQ…ENFRDICAGD (182 aa)) enclose the Glutamine amidotransferase type-1 domain. Cys73 acts as the Nucleophile in catalysis. Catalysis depends on residues His161 and Glu163.

In terms of assembly, heterodimer composed of a glutamine amidotransferase subunit (A) and a GMP-binding subunit (B).

It catalyses the reaction XMP + L-glutamine + ATP + H2O = GMP + L-glutamate + AMP + diphosphate + 2 H(+). It functions in the pathway purine metabolism; GMP biosynthesis; GMP from XMP (L-Gln route): step 1/1. In terms of biological role, catalyzes the synthesis of GMP from XMP. The chain is GMP synthase [glutamine-hydrolyzing] subunit A from Natronomonas pharaonis (strain ATCC 35678 / DSM 2160 / CIP 103997 / JCM 8858 / NBRC 14720 / NCIMB 2260 / Gabara) (Halobacterium pharaonis).